Here is an 89-residue protein sequence, read N- to C-terminus: Cytochrome c6 (89 aa).

Heme c is bound by residues Cys15, Cys18, His19, and Met61.

The protein belongs to the cytochrome c family. PetJ subfamily. Monomer. In terms of processing, binds 1 heme c group covalently per subunit.

It is found in the plastid. Its subcellular location is the chloroplast thylakoid lumen. Its function is as follows. Functions as an electron carrier between membrane-bound cytochrome b6-f and photosystem I in oxygenic photosynthesis. The polypeptide is Cytochrome c6 (petJ) (Tetradesmus obliquus (Green alga)).